Consider the following 313-residue polypeptide: Lactamase-like protein ptaB (313 aa).

His104, His106, Asp108, and His109 together coordinate Zn(2+). Asp108 acts as the Proton donor/acceptor in catalysis.

The protein belongs to the metallo-beta-lactamase superfamily. Zn(2+) is required as a cofactor.

The enzyme catalyses atrochrysone carboxyl-[ACP] + H2O = atrochrysone carboxylate + holo-[ACP] + H(+). Its pathway is secondary metabolite biosynthesis. Functionally, lactamase-like protein; part of the gene cluster that mediates the biosynthesis of pestheic acid, a diphenyl ether which is a biosynthetic precursor of the unique chloropupukeananes. The biosynthesis initiates from condensation of acetate and malonate units catalyzed by the non-reducing PKS ptaA. As the ptaA protein is TE/CLC domain-deficient, hydrolysis and Claisen cyclization of the polyketide could be catalyzed by ptaB containing a beta-lactamase domain. The ptaB protein might hydrolyze the thioester bond between the ACP of ptaA and the intermediate to release atrochrysone carboxylic acid, which is spontaneously dehydrated to form endocrocin anthrone. Endocrocin anthrone is then converted to endocrocin, catalyzed by the anthrone oxygenase ptaC. Spontaneous decarboxylation of endocrocin occurs to generate emodin. An O-methyltransferase (ptaH or ptaI) could methylate emodin to form physcion. PtaJ could then catalyze the oxidative cleavage of physcion, and rotation of the intermediate could then afford desmethylisosulochrin. PtaF, a putative NADH-dependent oxidoreductase, might also participate in the oxidative cleavage step. Desmethylisosulochrin is then transformed by another O-methyltransferase (ptaH or ptaI) to form isosulochrin. Chlorination of isosulochrin by ptaM in the cyclohexadienone B ring then produces chloroisosulochrin. PtaE is responsible for the oxidative coupling reactions of both benzophenones isosulochrin and chloroisosulochrin to RES-1214-1 and pestheic acid respectively, regardless of chlorination. The sequence is that of Lactamase-like protein ptaB from Pestalotiopsis fici (strain W106-1 / CGMCC3.15140).